The primary structure comprises 459 residues: tRNA modification GTPase MnmE (459 aa).

Residues arginine 20, glutamate 85, and arginine 124 each coordinate (6S)-5-formyl-5,6,7,8-tetrahydrofolate. Residues 221 to 380 form the TrmE-type G domain; that stretch reads GLSTVIIGRP…LEEAIQSLFY (160 aa). Position 231 (asparagine 231) interacts with K(+). GTP is bound by residues 231–236, 250–256, and 275–278; these read NVGKSS, TDIPGTT, and DTAG. Serine 235 is a Mg(2+) binding site. Threonine 250, isoleucine 252, and threonine 255 together coordinate K(+). A Mg(2+)-binding site is contributed by threonine 256. Residue lysine 459 coordinates (6S)-5-formyl-5,6,7,8-tetrahydrofolate.

This sequence belongs to the TRAFAC class TrmE-Era-EngA-EngB-Septin-like GTPase superfamily. TrmE GTPase family. As to quaternary structure, homodimer. Heterotetramer of two MnmE and two MnmG subunits. It depends on K(+) as a cofactor.

Its subcellular location is the cytoplasm. Its function is as follows. Exhibits a very high intrinsic GTPase hydrolysis rate. Involved in the addition of a carboxymethylaminomethyl (cmnm) group at the wobble position (U34) of certain tRNAs, forming tRNA-cmnm(5)s(2)U34. The polypeptide is tRNA modification GTPase MnmE (Bacillus velezensis (strain DSM 23117 / BGSC 10A6 / LMG 26770 / FZB42) (Bacillus amyloliquefaciens subsp. plantarum)).